Reading from the N-terminus, the 612-residue chain is 1,8-cineole synthase, chloroplastic (612 aa).

The transit peptide at 1-52 (MALVCGAPLASRSCLNKSLISSTHELKPLRRTILPTLRWKSATPSINMCLTT) directs the protein to the chloroplast. Positions 363, 367, and 515 each coordinate Mg(2+). Positions 363–367 (DDIYD) match the DDXXD motif motif.

It belongs to the terpene synthase family. Tpsd subfamily. Mg(2+) serves as cofactor. Requires Mn(2+) as cofactor.

Its subcellular location is the plastid. It localises to the chloroplast. The catalysed reaction is (2E)-geranyl diphosphate + H2O = 1,8-cineole + diphosphate. The protein operates within terpene metabolism; oleoresin biosynthesis. Terpene synthase (TPS) involved in the biosynthesis of monoterpene natural products included in conifer oleoresin secretions and volatile emissions; these compounds contribute to biotic and abiotic stress defense against herbivores and pathogens. Catalyzes the conversion of (2E)-geranyl diphosphate (GPP) to 1,8-cineole. This chain is 1,8-cineole synthase, chloroplastic, found in Picea glauca (White spruce).